We begin with the raw amino-acid sequence, 645 residues long: MAVLTAVDLTNASRYAIHMHRLEFISRWRTRFPHILIDYTLRPASSDDDYYVPPKLADKALAVKLAFSKRGCVSMSCYPFHETGVVSNTTPFMYMQTSETSVGYAQPACYHLDRAAAMREGAETQVQSAEFRYTLDNKCILVDSLSKMYFNSPYLRTEEHTIMGVDDVPAFNVRPDPDPLFPERFKGEFNEAYCRRFGRELFNGGCSFRWWESLIGFVLGDTIFVTFKMLANNIFSELRDFDYKAPSSILPPRPNVDSNAILAQWRSVRDNATDLEFEKLFNKNPTLNDLGMIVNGSPVQITYTAETGFTKTPIAYNYRGNERARVEHFEALDRSISDQDLESIITSFLEDYALVFGIATDIGFDMLMSGFKSMLKKINTSLIPAMKHMLLSTTRRVTVRMLGETYKAALVHSLNVIAIKTLTVTAKALTRIAIQASSIVGIVLILLTLADLVLALWDPFGYNNMFPREFPDDMSRTFLTAYFESFDNTTSREIIEFMPEFFSEMVETDDDATFESLFHLLDYVASLEVNSDGQMLNLEEGDEIEDFDESTLVGQALATSSLYTRMEFMQYTFRQNTLLSMNKENNNFNQIILGLFATNTIVAFTAFVIHTELIFFIFFVIFLMITFYYIIKESYEYYKTIDLLF.

Helical transmembrane passes span 437–457 (SSIV…LALW), 590–610 (QIIL…FVIH), and 611–631 (TELI…YYII).

Belongs to the baculoviridae p74 family. Interacts with the PIF complex composed of PIF1, PIF2 and PIF3.

The protein resides in the secreted. Its subcellular location is the virion membrane. Its function is as follows. Plays an essential role for oral infectivity of occlusion-derived virus (ODV) and also functions in host midgut attachment and fusion by binding to a specific host receptor. This chain is Per os infectivity factor 0 (P74), found in Autographa californica nuclear polyhedrosis virus (AcMNPV).